The primary structure comprises 278 residues: Adenylate kinase (278 aa).

50 to 55 is an ATP binding site; that stretch reads GAGKGT. The tract at residues 70-99 is NMP; that stretch reads ATGDMLRAQVAKGTALGKQAKKIMNEGGLV. Residues Thr71, Arg76, 97 to 99, 126 to 129, and Gln133 contribute to the AMP site; these read GLV and GFPR. Residues 167-204 form an LID region; it reads GRLVHPASGRSYHRIFNPPKDDMKDDITGEPLVQRSDD. ATP-binding positions include Arg168 and 177 to 178; that span reads SY. Arg201 and Arg212 together coordinate AMP. Residue Gln240 participates in ATP binding.

Belongs to the adenylate kinase family. AK2 subfamily. In terms of assembly, monomer.

The protein resides in the cytoplasm. The protein localises to the cytosol. Its subcellular location is the mitochondrion intermembrane space. The enzyme catalyses AMP + ATP = 2 ADP. Functionally, catalyzes the reversible transfer of the terminal phosphate group between ATP and AMP. Plays an important role in cellular energy homeostasis and in adenine nucleotide metabolism. Adenylate kinase activity is critical for regulation of the phosphate utilization and the AMP de novo biosynthesis pathways. The protein is Adenylate kinase (adk-1) of Neurospora crassa (strain ATCC 24698 / 74-OR23-1A / CBS 708.71 / DSM 1257 / FGSC 987).